Reading from the N-terminus, the 596-residue chain is Aspartate--tRNA(Asp/Asn) ligase (596 aa).

Glutamate 175 is a binding site for L-aspartate. The aspartate stretch occupies residues 199–202 (QQYK). L-aspartate is bound by residues arginine 221 and histidine 454. 221 to 223 (RDE) is an ATP binding site. Position 488 (glutamate 488) interacts with ATP. Arginine 495 serves as a coordination point for L-aspartate. An ATP-binding site is contributed by 540 to 543 (GIDR).

The protein belongs to the class-II aminoacyl-tRNA synthetase family. Type 1 subfamily. As to quaternary structure, homodimer.

It is found in the cytoplasm. The catalysed reaction is tRNA(Asx) + L-aspartate + ATP = L-aspartyl-tRNA(Asx) + AMP + diphosphate. Its function is as follows. Aspartyl-tRNA synthetase with relaxed tRNA specificity since it is able to aspartylate not only its cognate tRNA(Asp) but also tRNA(Asn). Reaction proceeds in two steps: L-aspartate is first activated by ATP to form Asp-AMP and then transferred to the acceptor end of tRNA(Asp/Asn). The polypeptide is Aspartate--tRNA(Asp/Asn) ligase (Rhizobium leguminosarum bv. trifolii (strain WSM2304)).